The primary structure comprises 272 residues: Dermonecrotic toxin StSicTox-betaIF1 (272 aa).

Residue histidine 5 is part of the active site. Residues glutamate 25 and aspartate 27 each contribute to the Mg(2+) site. The active-site Nucleophile is the histidine 41. 2 disulfide bridges follow: cysteine 45–cysteine 51 and cysteine 47–cysteine 189. Position 85 (aspartate 85) interacts with Mg(2+).

This sequence belongs to the arthropod phospholipase D family. Class II subfamily. Requires Mg(2+) as cofactor. Expressed by the venom gland.

It localises to the secreted. The enzyme catalyses an N-(acyl)-sphingosylphosphocholine = an N-(acyl)-sphingosyl-1,3-cyclic phosphate + choline. It catalyses the reaction an N-(acyl)-sphingosylphosphoethanolamine = an N-(acyl)-sphingosyl-1,3-cyclic phosphate + ethanolamine. It carries out the reaction a 1-acyl-sn-glycero-3-phosphocholine = a 1-acyl-sn-glycero-2,3-cyclic phosphate + choline. The catalysed reaction is a 1-acyl-sn-glycero-3-phosphoethanolamine = a 1-acyl-sn-glycero-2,3-cyclic phosphate + ethanolamine. Dermonecrotic toxins cleave the phosphodiester linkage between the phosphate and headgroup of certain phospholipids (sphingolipid and lysolipid substrates), forming an alcohol (often choline) and a cyclic phosphate. This toxin acts on sphingomyelin (SM). It may also act on ceramide phosphoethanolamine (CPE), lysophosphatidylcholine (LPC) and lysophosphatidylethanolamine (LPE), but not on lysophosphatidylserine (LPS), and lysophosphatidylglycerol (LPG). It acts by transphosphatidylation, releasing exclusively cyclic phosphate products as second products. Induces dermonecrosis, hemolysis, increased vascular permeability, edema, inflammatory response, and platelet aggregation. This chain is Dermonecrotic toxin StSicTox-betaIF1, found in Sicarius terrosus (Cave spider).